The chain runs to 179 residues: Ubiquitin-conjugating enzyme E2 C (179 aa).

A2 is modified (N-acetylalanine). S3 carries the post-translational modification Phosphoserine. The 146-residue stretch at 30–175 (PVGKRLQQEL…LQETYSKQVS (146 aa)) folds into the UBC core domain. The active-site Glycyl thioester intermediate is the C114.

It belongs to the ubiquitin-conjugating enzyme family. Component of the APC/C complex, composed of at least 14 distinct subunits that assemble into a complex of at least 19 chains with a combined molecular mass of around 1.2 MDa. Within this complex, directly interacts with ANAPC2. In terms of processing, autoubiquitinated by the APC/C complex, leading to its degradation by the proteasome. Its degradation plays a central role in APC/C regulation, allowing cyclin-A accumulation before S phase entry. APC/C substrates inhibit the autoubiquitination of UBE2C/UBCH10 but not its E2 function, hence APC/C remaining active until its substrates have been destroyed.

The enzyme catalyses S-ubiquitinyl-[E1 ubiquitin-activating enzyme]-L-cysteine + [E2 ubiquitin-conjugating enzyme]-L-cysteine = [E1 ubiquitin-activating enzyme]-L-cysteine + S-ubiquitinyl-[E2 ubiquitin-conjugating enzyme]-L-cysteine.. The catalysed reaction is S-ubiquitinyl-[E1 ubiquitin-activating enzyme]-L-cysteine + [acceptor protein]-L-lysine = [E1 ubiquitin-activating enzyme]-L-cysteine + N(6)-monoubiquitinyl-[acceptor protein]-L-lysine.. It participates in protein modification; protein ubiquitination. Its function is as follows. Accepts ubiquitin from the E1 complex and catalyzes its covalent attachment to other proteins. In vitro catalyzes 'Lys-11'- and 'Lys-48'-linked polyubiquitination. Acts as an essential factor of the anaphase promoting complex/cyclosome (APC/C), a cell cycle-regulated ubiquitin ligase that controls progression through mitosis. Acts by initiating 'Lys-11'-linked polyubiquitin chains on APC/C substrates, leading to the degradation of APC/C substrates by the proteasome and promoting mitotic exit. The polypeptide is Ubiquitin-conjugating enzyme E2 C (Ube2c) (Mus musculus (Mouse)).